Consider the following 925-residue polypeptide: Probable glycoprotein hormone G-protein coupled receptor (925 aa).

An N-terminal signal peptide occupies residues 1–27 (MEDRGICPRVLQVLFLVVLILISPVYA). Residues 28 to 529 (AKNDACTKCS…EDIMGYVWLT (502 aa)) are Extracellular-facing. N-linked (GlcNAc...) asparagine glycosylation is present at Asn61. LRR repeat units lie at residues 85 to 106 (KLKY…RVKN), 110 to 131 (SLIT…AFDD), 134 to 155 (QLTQ…NKTS), 156 to 180 (SVTK…GNLP), 181 to 202 (SLEN…IFRQ), 203 to 224 (NTRL…NEDA), 230 to 250 (SLKT…RGLK), and 251 to 273 (NLHF…DSIR). Residue Asn152 is glycosylated (N-linked (GlcNAc...) asparagine). N-linked (GlcNAc...) asparagine glycosylation occurs at Asn212. The tract at residues 299–493 (TMQKPSTEEN…PTLIPHSNHT (195 aa)) is disordered. Residues 301–318 (QKPSTEENNGQTTASSPT) show a composition bias toward polar residues. The 1; truncated repeat unit spans residues 333-349 (STQPHTTSGFGGGGFPG). The interval 333 to 461 (STQPHTTSGF…PGGGGFPGGG (129 aa)) is 5 X approximate tandem repeats. Residues 341–362 (GFGGGGFPGGGGGFPGGGGFPA) are compositionally biased toward gly residues. 3 tandem repeats follow at residues 350–384 (GGGG…GFPG), 385–419 (GGGG…GFPG), and 420–453 (GGGG…GFPG). Over residues 365-375 (SKTSTQPHTTS) the composition is skewed to polar residues. Positions 376–397 (GFGGGGFPGGGGGFPGGGGFPA) are enriched in gly residues. The span at 400–410 (SKTSTQPHTTS) shows a compositional bias: polar residues. Positions 411-432 (GFGGGGFPGGGGGFPGGGGFPG) are enriched in gly residues. Positions 434 to 445 (SNTSTQPHTTSN) are enriched in polar residues. Asn435 carries an N-linked (GlcNAc...) asparagine glycan. Gly residues predominate over residues 446–462 (SGGGGFPGGGGFPGGGT). One copy of the 5; truncated repeat lies at 454–461 (GGGFPGGG). Over residues 476-493 (VHQSTADPPTLIPHSNHT) the composition is skewed to polar residues. An N-linked (GlcNAc...) asparagine glycan is attached at Asn495. A helical transmembrane segment spans residues 530 to 551 (VVSFMVGAVALVANLVVALVLL). Topologically, residues 552-561 (TSQRRLNVTR) are cytoplasmic. A helical transmembrane segment spans residues 562-584 (FLMCNLAFADFILGLYIFILTSV). The Extracellular segment spans residues 585 to 606 (SAVTRGDYHNYVQQWQNGAGCK). The chain crosses the membrane as a helical span at residues 607–628 (ILGFLAVFSSELSLFTLVMMTI). Topologically, residues 629–651 (ERFYAIVHAMHMNARLSFRKTVR) are cytoplasmic. Residues 652-673 (FMIGGWIFALVMAVVPLTGVSG) form a helical membrane-spanning segment. The Extracellular segment spans residues 674–691 (YSKVAICLPFDVSDATST). Residues 692–712 (AYVAFLLLVNGASFISVMYLY) form a helical membrane-spanning segment. Topologically, residues 713 to 739 (SRMLYVVVSGGDMEGAPKRNDSKVAKR) are cytoplasmic. A helical transmembrane segment spans residues 740–763 (MAILVFTDMLCWAPIAFFGLLAAF). Over 764 to 774 (GQTLLTVTQSK) the chain is Extracellular. The chain crosses the membrane as a helical span at residues 775 to 795 (ILLVFFFPINSICNPFLYAFF). Residues 796–925 (TKAFKRELFT…QKQKILQSPS (130 aa)) lie on the Cytoplasmic side of the membrane. The segment at 904–925 (VTKSSSPPHLKLQKQKILQSPS) is disordered.

The protein belongs to the G-protein coupled receptor 1 family. FSH/LSH/TSH subfamily.

It localises to the cell membrane. Probable receptor for a glycoprotein hormone. This Anthopleura elegantissima (Green aggregating anemone) protein is Probable glycoprotein hormone G-protein coupled receptor.